We begin with the raw amino-acid sequence, 563 residues long: Arginine--tRNA ligase (563 aa).

The 'HIGH' region motif lies at 120–130 (PNIAKPFHVGH).

The protein belongs to the class-I aminoacyl-tRNA synthetase family. Monomer.

Its subcellular location is the cytoplasm. The enzyme catalyses tRNA(Arg) + L-arginine + ATP = L-arginyl-tRNA(Arg) + AMP + diphosphate. The sequence is that of Arginine--tRNA ligase from Clostridium beijerinckii (strain ATCC 51743 / NCIMB 8052) (Clostridium acetobutylicum).